The sequence spans 329 residues: UDP-glucose 4-epimerase (329 aa).

NAD(+)-binding positions include 13–14 (YV), 33–38 (HNLSTG), 53–54 (DI), 76–80 (FAAFS), Asn-95, Thr-120, Tyr-144, Lys-148, and Phe-172. Residues Thr-120 and Tyr-144 each contribute to the substrate site. Tyr-144 functions as the Proton acceptor in the catalytic mechanism. Substrate contacts are provided by residues Asn-173, 190 to 191 (HL), 207 to 209 (SVY), Arg-221, and 281 to 284 (RGRD).

This sequence belongs to the NAD(P)-dependent epimerase/dehydratase family. Homodimer. Requires NAD(+) as cofactor.

It catalyses the reaction UDP-alpha-D-glucose = UDP-alpha-D-galactose. It functions in the pathway carbohydrate metabolism; galactose metabolism. Its function is as follows. Involved in the metabolism of galactose. Catalyzes the conversion of UDP-galactose (UDP-Gal) to UDP-glucose (UDP-Glc) through a mechanism involving the transient reduction of NAD. The chain is UDP-glucose 4-epimerase (galE) from Streptomyces lividans.